The primary structure comprises 414 residues: Wilms tumor protein homolog A (414 aa).

Glycyl lysine isopeptide (Lys-Gly) (interchain with G-Cter in SUMO) cross-links involve residues lysine 55 and lysine 158. The 9aaTAD signature appears at 217–225 (MTWNQMNLG). 3 C2H2-type zinc fingers span residues 288 to 312 (FMCA…SRKH), 318 to 342 (YQCD…QRRH), and 348 to 370 (FQCK…TRTH). Important for interaction with target DNA regions lie at residues 332–346 (SDQL…TGIK) and 358–366 (SRSDHLKTH). The short motif at 373-375 (KTS) is the KTS motif element. The segment at 379 to 403 (FSCRWPSCQKKFARSDELVRHHNMH) adopts a C2H2-type 4 zinc-finger fold.

Belongs to the EGR C2H2-type zinc-finger protein family. As to expression, expressed around the pronephric anlage and in the pronephros; expression is restricted to the splanchnic mesoderm (the site where the glomus forms) from tailbud stages, and the glomus of early tadpoles. Not expressed in the pronephric tubules or pronephric duct. In tadpoles (stage 38-39), additional expression begins in the heart. Also expressed in the adult kidney (mesonephros).

The protein resides in the nucleus. Its subcellular location is the cytoplasm. It localises to the nucleus speckle. Functionally, transcription factor required for development of the vascular component of the pronephric kidney, the glomus; may repress tubule-specific gene expression in the portion of the pronephros fated to form the glomus. Recognizes and binds to the DNA sequence 5'-GCG(T/G)GGGCG-3'. Inhibits Wnt-signaling during embryonic development. Function may be isoform-specific: the isoform containing the KTS motif is less effective in inhibiting wnt signaling. The sequence is that of Wilms tumor protein homolog A (wt1-a) from Xenopus laevis (African clawed frog).